Reading from the N-terminus, the 325-residue chain is Eukaryotic translation initiation factor 3 subunit I (325 aa).

WD repeat units lie at residues 8–47 (GHER…RLGT), 50–91 (GHTG…ALLK), 144–183 (CNDS…VLVN), and 186–225 (EHSR…HQKT). Phosphothreonine is present on Thr219. Lys264 carries the N6-acetyllysine modification. Lys282 is covalently cross-linked (Glycyl lysine isopeptide (Lys-Gly) (interchain with G-Cter in ubiquitin)). The WD 5 repeat unit spans residues 283–324 (GHFGPINSVAFHPDGKSYSSGGEDGYVRIHYFDPQYFEFEFE). Phosphotyrosine is present on Tyr308.

This sequence belongs to the eIF-3 subunit I family. Component of the eukaryotic translation initiation factor 3 (eIF-3) complex, which is composed of 13 subunits: EIF3A, EIF3B, EIF3C, EIF3D, EIF3E, EIF3F, EIF3G, EIF3H, EIF3I, EIF3J, EIF3K, EIF3L and EIF3M. The eIF-3 complex appears to include 3 stable modules: module A is composed of EIF3A, EIF3B, EIF3G and EIF3I; module B is composed of EIF3F, EIF3H, and EIF3M; and module C is composed of EIF3C, EIF3D, EIF3E, EIF3K and EIF3L. EIF3C of module C binds EIF3B of module A and EIF3H of module B, thereby linking the three modules. EIF3J is a labile subunit that binds to the eIF-3 complex via EIF3B. The eIF-3 complex interacts with RPS6KB1 under conditions of nutrient depletion. Mitogenic stimulation leads to binding and activation of a complex composed of MTOR and RPTOR, leading to phosphorylation and release of RPS6KB1 and binding of EIF4B to eIF-3. In terms of processing, phosphorylated by TGF-beta type II receptor.

It is found in the cytoplasm. Functionally, component of the eukaryotic translation initiation factor 3 (eIF-3) complex, which is required for several steps in the initiation of protein synthesis. The eIF-3 complex associates with the 40S ribosome and facilitates the recruitment of eIF-1, eIF-1A, eIF-2:GTP:methionyl-tRNAi and eIF-5 to form the 43S pre-initiation complex (43S PIC). The eIF-3 complex stimulates mRNA recruitment to the 43S PIC and scanning of the mRNA for AUG recognition. The eIF-3 complex is also required for disassembly and recycling of post-termination ribosomal complexes and subsequently prevents premature joining of the 40S and 60S ribosomal subunits prior to initiation. The eIF-3 complex specifically targets and initiates translation of a subset of mRNAs involved in cell proliferation, including cell cycling, differentiation and apoptosis, and uses different modes of RNA stem-loop binding to exert either translational activation or repression. The polypeptide is Eukaryotic translation initiation factor 3 subunit I (Bos taurus (Bovine)).